The chain runs to 206 residues: Thymidylate kinase (206 aa).

ATP is bound at residue 10-17; sequence GNDGSGKS.

It belongs to the thymidylate kinase family.

The enzyme catalyses dTMP + ATP = dTDP + ADP. Its function is as follows. Phosphorylation of dTMP to form dTDP in both de novo and salvage pathways of dTTP synthesis. The sequence is that of Thymidylate kinase from Caldicellulosiruptor saccharolyticus (strain ATCC 43494 / DSM 8903 / Tp8T 6331).